A 94-amino-acid polypeptide reads, in one-letter code: MANTRSAKKRALVAAKRTARNKMVKSSLRTAIRKFREALGTENAPILLNRAFSALDRAASKGVIHKNTAARKKARLAKALAKATAAQAVAAANE.

Belongs to the bacterial ribosomal protein bS20 family.

Its function is as follows. Binds directly to 16S ribosomal RNA. The protein is Small ribosomal subunit protein bS20 of Symbiobacterium thermophilum (strain DSM 24528 / JCM 14929 / IAM 14863 / T).